Here is a 212-residue protein sequence, read N- to C-terminus: Peptide methionine sulfoxide reductase MsrA (212 aa).

Cys-52 is a catalytic residue.

It belongs to the MsrA Met sulfoxide reductase family.

The enzyme catalyses L-methionyl-[protein] + [thioredoxin]-disulfide + H2O = L-methionyl-(S)-S-oxide-[protein] + [thioredoxin]-dithiol. The catalysed reaction is [thioredoxin]-disulfide + L-methionine + H2O = L-methionine (S)-S-oxide + [thioredoxin]-dithiol. In terms of biological role, has an important function as a repair enzyme for proteins that have been inactivated by oxidation. Catalyzes the reversible oxidation-reduction of methionine sulfoxide in proteins to methionine. In Shigella dysenteriae serotype 1 (strain Sd197), this protein is Peptide methionine sulfoxide reductase MsrA.